We begin with the raw amino-acid sequence, 280 residues long: Fructose-1,6-bisphosphatase class 1 (280 aa).

Mg(2+) is bound by residues glutamate 64, aspartate 83, leucine 85, and aspartate 86. Substrate-binding positions include 86 to 89 (DGSS), tyrosine 189, and lysine 220. Mg(2+) is bound at residue glutamate 226.

Belongs to the FBPase class 1 family. As to quaternary structure, homotetramer. Mg(2+) serves as cofactor.

It is found in the cytoplasm. It carries out the reaction beta-D-fructose 1,6-bisphosphate + H2O = beta-D-fructose 6-phosphate + phosphate. It participates in carbohydrate biosynthesis; gluconeogenesis. The polypeptide is Fructose-1,6-bisphosphatase class 1 (Campylobacter jejuni subsp. doylei (strain ATCC BAA-1458 / RM4099 / 269.97)).